We begin with the raw amino-acid sequence, 74 residues long: Transcription attenuation protein MtrB (74 aa).

The protein belongs to the MtrB family. Oligomer of 11 identical subunits arranged in doughnut-like structure.

In terms of biological role, required for transcription attenuation control in the Trp operon. This trans-acting factor seems to recognize a 10 bases nucleotide sequence in the Trp leader transcript causing transcription termination. Binds the leader RNA only in presence of L-tryptophan. This chain is Transcription attenuation protein MtrB, found in Geobacillus sp. (strain WCH70).